The sequence spans 356 residues: Heparan sulfate 2-O-sulfotransferase 1 (356 aa).

The Cytoplasmic segment spans residues 1–11; sequence MGLLRIMMPPK. Residues 12-28 traverse the membrane as a helical; Signal-anchor for type II membrane protein segment; the sequence is LQLLAVVAFAVAMLFLE. Positions 24–51 form a coiled coil; it reads MLFLENQIQKLEESRSKLERAIARHEVR. Residues 29–356 lie on the Lumenal side of the membrane; the sequence is NQIQKLEESR…FYEKIYPKSN (328 aa). Adenosine 3',5'-bisphosphate contacts are provided by K83, T84, A85, S86, T87, and S88. N108 and N127 each carry an N-linked (GlcNAc...) asparagine glycan. Catalysis depends on residues H140 and H142. Positions 164 and 172 each coordinate adenosine 3',5'-bisphosphate. Intrachain disulfides connect C201–C209 and C222–C228. Adenosine 3',5'-bisphosphate contacts are provided by Y279, S285, T290, and K293.

The protein belongs to the sulfotransferase 3 family. As to quaternary structure, homotrimer. Interacts with the C5-epimerase GLCE. N-glycosylated.

Its subcellular location is the golgi apparatus membrane. Functionally, catalyzes the transfer of a sulfo group from 3'-phospho-5'-adenylyl sulfate (PAPS) to the 2-OH position of iduronic acid (IdoA) or glucuronic acid (GlcA) within the heparan sulfate (HS) chain and participates in HS biosynthesis. Required for metanephric development of kidney formation, suggesting that 2-O-sulfation within HS is essential for signaling between ureteric bud and metanephric mesenchyme. This chain is Heparan sulfate 2-O-sulfotransferase 1, found in Pongo abelii (Sumatran orangutan).